We begin with the raw amino-acid sequence, 380 residues long: Acyl-coenzyme A diphosphatase SCS3 (380 aa).

Topologically, residues 1–7 are cytoplasmic; the sequence is MSSKWFN. Residues 8-28 traverse the membrane as a helical segment; sequence AIHLLVCPLTVLVGYLMNAYG. At 29-43 the chain is on the lumenal side; that stretch reads YGAALQATLNKDGLV. Residues 44–64 traverse the membrane as a helical segment; that stretch reads NAMLVKKGWFWTSLVGWWCII. Topologically, residues 65–88 are cytoplasmic; sequence RYRAVPGATGRDRRHIVQSFKRYA. The chain crosses the membrane as a helical span at residues 89 to 109; sequence ILTVWWYVFTQGIWFGVGPIM. At 110–233 the chain is on the lumenal side; that stretch reads DLVFVYTGGH…GHWAGGHDPS (124 aa). The chain crosses the membrane as a helical span at residues 234–254; the sequence is GHVFLATLMCMFLLGELRVFG. The active site involves H235. At 255 to 325 the chain is on the cytoplasmic side; that stretch reads RRALAHLYAQ…LTRCIACDHP (71 aa). The helical transmembrane segment at 326–346 threads the bilayer; the sequence is VIILLTLLVTWLWQLLLTAVA. At 347–356 the chain is on the lumenal side; that stretch reads SRFHTVREHM. Residue H350 is part of the active site. Residues 357–377 traverse the membrane as a helical segment; the sequence is SGLLAAYIVTGLVYARDAAAL. Residues 378–380 lie on the Cytoplasmic side of the membrane; it reads RPV.

It belongs to the FIT family. Fungal FIT2B/SCS3 subfamily.

The protein localises to the endoplasmic reticulum membrane. The catalysed reaction is an acyl-CoA + H2O = an acyl-4'-phosphopantetheine + adenosine 3',5'-bisphosphate + 2 H(+). The enzyme catalyses (9Z)-octadecenoyl-CoA + H2O = S-(9Z-octadecenoyl)-4'-phosphopantetheine + adenosine 3',5'-bisphosphate + 2 H(+). It carries out the reaction (5Z,8Z,11Z,14Z)-eicosatetraenoyl-CoA + H2O = S-(5Z,8Z,11Z,14Z-eicosatetraenoyl)-4'-phosphopantetheine + adenosine 3',5'-bisphosphate + 2 H(+). It catalyses the reaction hexadecanoyl-CoA + H2O = S-hexadecanoyl-4'-phosphopantetheine + adenosine 3',5'-bisphosphate + 2 H(+). In terms of biological role, fatty acyl-coenzyme A (CoA) diphosphatase that hydrolyzes fatty acyl-CoA to yield acyl-4'-phosphopantetheine and adenosine 3',5'-bisphosphate. Preferentially hydrolyzes unsaturated long-chain acyl-CoA substrates in the endoplasmic reticulum (ER) lumen. This catalytic activity is required for maintaining ER structure and for lipid droplets (LDs) biogenesis, which are lipid storage organelles involved in maintaining lipid and energy homeostasis. May directly bind to diacylglycerol (DAGs) and triacylglycerol, which is also important for LD biogenesis. May support directional budding of nacent LDs from the ER into the cytosol by reducing DAG levels at sites of LD formation. May play a role in the regulation of cell morphology and cytoskeletal organization. Involved in phospholipid biosynthesis. The protein is Acyl-coenzyme A diphosphatase SCS3 of Saccharomyces cerevisiae (strain ATCC 204508 / S288c) (Baker's yeast).